We begin with the raw amino-acid sequence, 325 residues long: MKPILLQGHERSITQIKYNREGDLLFSVAKDPIANVWYSVNGERLGTYNGHTGAVWCVDVDWDTKNVLTGSADNSCRLWDCETGKQLALLETSSAVRTCGFDFSGNIIMFSTDKQMGYQCFLNYYDLRDPQQIEDNQPYISVPCSESKITSAVWGPLGEFVIAGHENGEINQFSAKSGEVLKKAKEHTKQINDIQSSVDLTMIISASKDCTAKMFDSSTLEHVKTFKTERPVNSAAISPIMDHVVMGGGQEAMEVTTTSTRIGKFEARFFHAAYEEEFGRVKGHFGPINCVAFHPDGKSYSSGGEDGYVRIHYFDPHYFDFELEA.

WD repeat units follow at residues 8–47 (GHER…RLGT), 50–89 (GHTG…QLAL), 144–183 (CSES…VLKK), 186–225 (EHTK…HVKT), and 283–324 (GHFG…FELE).

This sequence belongs to the eIF-3 subunit I family. In terms of assembly, component of the eukaryotic translation initiation factor 3 (eIF-3) complex, which is composed of 13 subunits: eif3a, eif3b, eif3c, eif3d, eif3e, eif3f, eif3g, eif3h, eif3i, eif3j, eif3k, eif3l and eif3m.

Its subcellular location is the cytoplasm. Its function is as follows. Component of the eukaryotic translation initiation factor 3 (eIF-3) complex, which is involved in protein synthesis of a specialized repertoire of mRNAs and, together with other initiation factors, stimulates binding of mRNA and methionyl-tRNAi to the 40S ribosome. The eIF-3 complex specifically targets and initiates translation of a subset of mRNAs involved in cell proliferation. This Danio rerio (Zebrafish) protein is Eukaryotic translation initiation factor 3 subunit I (eif3i).